The chain runs to 899 residues: Translation initiation factor IF-2 (899 aa).

Disordered stretches follow at residues 31–227 (KKAE…ATEQ) and 240–310 (VTTS…GFDK). 2 stretches are compositionally biased toward polar residues: residues 36 to 47 (NVSQTEKQSLLS) and 73 to 87 (STLSVAGTGGKSKSV). 3 stretches are compositionally biased toward basic and acidic residues: residues 101–173 (SALE…EKAK), 181–219 (AKSETELLQLRREEEAKRKAEEDSQRQLEEARKMAETNE), and 247–261 (RAAEDEQDRKEETTG). Residues 296–308 (PQVNAPTSMQQGF) are compositionally biased toward polar residues. One can recognise a tr-type G domain in the interval 398-565 (SRAPVVTIMG…AILLQSEILE (168 aa)). Residues 407–414 (GHVDHGKT) form a G1 region. 407–414 (GHVDHGKT) contacts GTP. The interval 432–436 (GITQH) is G2. The tract at residues 453 to 456 (DTPG) is G3. Residues 453 to 457 (DTPGH) and 507 to 510 (NKID) contribute to the GTP site. Residues 507–510 (NKID) form a G4 region. The interval 543-545 (SAK) is G5.

It belongs to the TRAFAC class translation factor GTPase superfamily. Classic translation factor GTPase family. IF-2 subfamily.

The protein localises to the cytoplasm. Its function is as follows. One of the essential components for the initiation of protein synthesis. Protects formylmethionyl-tRNA from spontaneous hydrolysis and promotes its binding to the 30S ribosomal subunits. Also involved in the hydrolysis of GTP during the formation of the 70S ribosomal complex. The sequence is that of Translation initiation factor IF-2 from Photobacterium profundum (strain SS9).